A 1186-amino-acid chain; its full sequence is Trafficking protein particle complex II-specific subunit 120 homolog (1186 aa).

Disordered regions lie at residues 777–824 and 964–984; these read PTDS…EKES and TKDP…SEKN. The span at 779–792 shows a compositional bias: polar residues; it reads DSDNTMSSGRNAAG. A Phosphoserine modification is found at serine 971. The segment covering 972–981 has biased composition (low complexity); the sequence is PSSSRNPSFS.

This sequence belongs to the TRS120 family. As to quaternary structure, part of the multisubunit TRAPP (transport protein particle) II complex composed of BET3, BET5, TRS20, TRS23, TRS31, TRS33, TRS65, TRS85, TRS120 and TRS130. In terms of tissue distribution, expressed in roots, leaves, stems and flowers.

It localises to the golgi apparatus. Its subcellular location is the trans-Golgi network. It is found in the early endosome. Specific subunit of the TRAPP II complex, a highly conserved vesicle tethering complex that is required for the proper transport of proteins in post-Golgi trafficking pathways to the growing cell plate in mitotic active cells. Required for the polarized and selective transport of PIN2 and probably PIN1 to the plasma membrane. Not required for ER-to-Golgi as well as biosynthetic and endocytic vacuolar transport. In Arabidopsis thaliana (Mouse-ear cress), this protein is Trafficking protein particle complex II-specific subunit 120 homolog.